Here is a 557-residue protein sequence, read N- to C-terminus: IgE-binding protein (557 aa).

A disordered region spans residues 113-172 (DGLGKPALSSSEAGEESSSEETDWEEEAAHYQPANWSRKKPKAAGEGQFADWPQGSRLQG). The segment covering 125–138 (AGEESSSEETDWEE) has biased composition (acidic residues). The Integrase catalytic domain maps to 344–534 (TAIRPGRRSR…TAAERHVQSQ (191 aa)).

The protein is IgE-binding protein (Iap) of Mus musculus (Mouse).